Here is a 195-residue protein sequence, read N- to C-terminus: Large ribosomal subunit protein mL58 (195 aa).

Residues Met-1–Trp-18 constitute a mitochondrion transit peptide.

This sequence belongs to the mitochondrion-specific ribosomal protein mL58 family. As to quaternary structure, component of the mitochondrial large ribosomal subunit (mt-LSU). Mature yeast 74S mitochondrial ribosomes consist of a small (37S) and a large (54S) subunit. The 37S small subunit contains a 15S ribosomal RNA (15S mt-rRNA) and 34 different proteins. The 54S large subunit contains a 21S rRNA (21S mt-rRNA) and 46 different proteins.

It localises to the mitochondrion. Component of the mitochondrial ribosome (mitoribosome), a dedicated translation machinery responsible for the synthesis of mitochondrial genome-encoded proteins, including at least some of the essential transmembrane subunits of the mitochondrial respiratory chain. The mitoribosomes are attached to the mitochondrial inner membrane and translation products are cotranslationally integrated into the membrane. This Saccharomyces cerevisiae (strain ATCC 204508 / S288c) (Baker's yeast) protein is Large ribosomal subunit protein mL58 (MRPL20).